The following is a 430-amino-acid chain: Type II methyltransferase M.Sau96I (430 aa).

In terms of domain architecture, HTH cro/C1-type spans 9 to 63; it reads IEKMKNQNIKTQTELAEKIDISKSQLSFMFSDEYEPLKKNVIKLADVLKVSPNDI. The 331-residue stretch at 99–429 folds into the SAM-dependent MTase C5-type domain; that stretch reads YNVFETFAGA…KSLVHYLNQF (331 aa). Cys174 is an active-site residue.

The protein belongs to the class I-like SAM-binding methyltransferase superfamily. C5-methyltransferase family.

It carries out the reaction a 2'-deoxycytidine in DNA + S-adenosyl-L-methionine = a 5-methyl-2'-deoxycytidine in DNA + S-adenosyl-L-homocysteine + H(+). A methylase that recognizes the double-stranded sequence 5'-GGNCC-3', methylates C-4 on both strands, and protects the DNA from cleavage by the Sau96I endonuclease. The protein is Type II methyltransferase M.Sau96I of Staphylococcus aureus.